The chain runs to 369 residues: Histone deacetylase 8 (369 aa).

The interval 5–316 is histone deacetylase; the sequence is LLPVYIHSAE…WTYLTALIVG (312 aa). Asp-93 provides a ligand contact to substrate. His-135 serves as the catalytic Proton acceptor. A substrate-binding site is contributed by Gly-143. 3 residues coordinate a divalent metal cation: Asp-170, His-172, and Asp-259. Residue Tyr-298 coordinates substrate.

Belongs to the histone deacetylase family. HD type 1 subfamily. A divalent metal cation serves as cofactor.

It is found in the nucleus. Its subcellular location is the chromosome. The protein localises to the cytoplasm. The enzyme catalyses N(6)-acetyl-L-lysyl-[histone] + H2O = L-lysyl-[histone] + acetate. It carries out the reaction N(6)-acetyl-L-lysyl-[protein] + H2O = L-lysyl-[protein] + acetate. The catalysed reaction is N(6)-(2E)-butenoyl-L-lysyl-[protein] + H2O = (2E)-2-butenoate + L-lysyl-[protein]. Its activity is inhibited by trichostatin A (TSA) and butyrate, 2 well known histone deacetylase inhibitors. Histone deacetylase that catalyzes the deacetylation of lysine residues on the N-terminal part of the core histones (H2A, H2B, H3 and H4). Histone deacetylation gives a tag for epigenetic repression and plays an important role in transcriptional regulation, cell cycle progression and developmental events. Histone deacetylases act via the formation of large multiprotein complexes. Also involved in the deacetylation of non-histone proteins. In addition to protein deacetylase activity, also has protein-lysine deacylase activity: acts as a protein decrotonylase by mediating decrotonylation ((2E)-butenoyl) of histones. This Xenopus tropicalis (Western clawed frog) protein is Histone deacetylase 8 (hdac8).